We begin with the raw amino-acid sequence, 459 residues long: ATP-binding protein Uup-like (459 aa).

The 219-residue stretch at 132–350 (FEMEDVSYEI…QQANFWASKA (219 aa)) folds into the ABC transporter domain. 164-171 (GPNGCGKT) is a binding site for ATP. A compositionally biased stretch (basic and acidic residues) spans 357–375 (AKKSEPLKEESAVKNDRTS). Residues 357–381 (AKKSEPLKEESAVKNDRTSKPKSVK) are disordered.

It belongs to the ABC transporter superfamily. ABCF family. Uup subfamily.

Its subcellular location is the cytoplasm. The catalysed reaction is ATP + H2O = ADP + phosphate + H(+). Functionally, might play a role in ribosome assembly or function; this is missing the first ABC transporter domain compared to paralogs. This is ATP-binding protein Uup-like (uup-B) from Haemophilus influenzae (strain ATCC 51907 / DSM 11121 / KW20 / Rd).